Reading from the N-terminus, the 309-residue chain is Mitochondrial import receptor subunit TOM34 (309 aa).

Serine 8 carries the phosphoserine modification. TPR repeat units lie at residues 9-42 (VEQL…LQAR), 51-84 (SVLY…VPFS), and 86-118 (KPLL…DNSV). Positions 158–187 (WSSLPSENHKETAKSKSKETTATKNRVPSA) are disordered. Serine 160 is modified (phosphoserine). Basic and acidic residues predominate over residues 164 to 178 (ENHKETAKSKSKETT). Serine 186 is modified (phosphoserine). TPR repeat units follow at residues 193-226 (ARVL…SSLE), 227-260 (SATY…DGKN), and 262-294 (KAFY…EPRN). Lysine 197 is covalently cross-linked (Glycyl lysine isopeptide (Lys-Gly) (interchain with G-Cter in SUMO2)).

This sequence belongs to the Tom34 family. Interacts with HSP90A, VCP, ATP6V1D, KIAA0665, AMPK, and DMAP1 through its TPR repeat.

It is found in the cytoplasm. Its subcellular location is the mitochondrion outer membrane. Functionally, plays a role in the import of cytosolically synthesized preproteins into mitochondria. Binds the mature portion of precursor proteins. Interacts with cellular components, and possesses weak ATPase activity. May be a chaperone-like protein that helps to keep newly synthesized precursors in an unfolded import compatible state. The chain is Mitochondrial import receptor subunit TOM34 (Tomm34) from Rattus norvegicus (Rat).